The sequence spans 84 residues: Insulin-like peptide 05 (84 aa).

The signal sequence occupies residues 1–22; that stretch reads MKTPILFVVVVAVLIVTDSAEG. Positions 23–37 are excised as a propeptide; it reads FKGKANSFLKPLQRR. 3 disulfides stabilise this stretch: C43–C48, C44–C73, and C57–C61.

The protein belongs to the insulin family.

The protein resides in the secreted. Its function is as follows. Insulin decreases blood glucose concentration. May have evolved to activate insulin receptors (INSR) in vertebrates. Molecular docking studies reveals unique interaction with the human insulin receptor. In vivo, insulin-like peptide injection reduces blood glucose levels in two models of zebrafish diabetes (streptozotocin- and glucose-induced). Also shorter swimming distance of zebrafish larvae, an effect which is not observed with human insulin. In Exaiptasia diaphana (Tropical sea anemone), this protein is Insulin-like peptide 05.